The sequence spans 340 residues: DNA-directed RNA polymerase subunit alpha (340 aa).

Residues Met1–Asp233 are alpha N-terminal domain (alpha-NTD). Positions Asp246–Glu340 are alpha C-terminal domain (alpha-CTD).

This sequence belongs to the RNA polymerase alpha chain family. As to quaternary structure, homodimer. The RNAP catalytic core consists of 2 alpha, 1 beta, 1 beta' and 1 omega subunit. When a sigma factor is associated with the core the holoenzyme is formed, which can initiate transcription.

The catalysed reaction is RNA(n) + a ribonucleoside 5'-triphosphate = RNA(n+1) + diphosphate. Functionally, DNA-dependent RNA polymerase catalyzes the transcription of DNA into RNA using the four ribonucleoside triphosphates as substrates. The chain is DNA-directed RNA polymerase subunit alpha from Pelobacter propionicus (strain DSM 2379 / NBRC 103807 / OttBd1).